Consider the following 201-residue polypeptide: Pyrrolidone-carboxylate peptidase (201 aa).

Catalysis depends on residues glutamate 81, cysteine 143, and histidine 168.

It belongs to the peptidase C15 family. Homotetramer.

The protein localises to the cytoplasm. It catalyses the reaction Release of an N-terminal pyroglutamyl group from a polypeptide, the second amino acid generally not being Pro.. Its function is as follows. Removes 5-oxoproline from various penultimate amino acid residues except L-proline. This chain is Pyrrolidone-carboxylate peptidase (pcp), found in Halalkalibacterium halodurans (strain ATCC BAA-125 / DSM 18197 / FERM 7344 / JCM 9153 / C-125) (Bacillus halodurans).